Here is a 246-residue protein sequence, read N- to C-terminus: Ribosomal RNA large subunit methyltransferase E (246 aa).

Residues glycine 81, tryptophan 83, aspartate 104, aspartate 120, and aspartate 144 each contribute to the S-adenosyl-L-methionine site. Lysine 184 serves as the catalytic Proton acceptor.

It belongs to the class I-like SAM-binding methyltransferase superfamily. RNA methyltransferase RlmE family.

The protein resides in the cytoplasm. The enzyme catalyses uridine(2552) in 23S rRNA + S-adenosyl-L-methionine = 2'-O-methyluridine(2552) in 23S rRNA + S-adenosyl-L-homocysteine + H(+). Specifically methylates the uridine in position 2552 of 23S rRNA at the 2'-O position of the ribose in the fully assembled 50S ribosomal subunit. This Agrobacterium fabrum (strain C58 / ATCC 33970) (Agrobacterium tumefaciens (strain C58)) protein is Ribosomal RNA large subunit methyltransferase E.